Reading from the N-terminus, the 692-residue chain is Elongation factor G (692 aa).

The tr-type G domain maps to 8 to 283 (DKYRNIGIMA…AVVDYMPSPL (276 aa)). GTP-binding positions include 17–24 (AHIDAGKT), 81–85 (DTPGH), and 135–138 (NKMD).

Belongs to the TRAFAC class translation factor GTPase superfamily. Classic translation factor GTPase family. EF-G/EF-2 subfamily.

The protein localises to the cytoplasm. Catalyzes the GTP-dependent ribosomal translocation step during translation elongation. During this step, the ribosome changes from the pre-translocational (PRE) to the post-translocational (POST) state as the newly formed A-site-bound peptidyl-tRNA and P-site-bound deacylated tRNA move to the P and E sites, respectively. Catalyzes the coordinated movement of the two tRNA molecules, the mRNA and conformational changes in the ribosome. This Trichlorobacter lovleyi (strain ATCC BAA-1151 / DSM 17278 / SZ) (Geobacter lovleyi) protein is Elongation factor G.